A 301-amino-acid polypeptide reads, in one-letter code: Protein KTI12 homolog (301 aa).

Gly8–Ser15 lines the ATP pocket. Positions Leu262–Leu275 are calmodulin-binding.

Belongs to the KTI12 family. As to quaternary structure, interacts with the elongator complex. Binds to calmodulin in a calcium-dependent manner.

Its subcellular location is the cytoplasm. The protein resides in the nucleus. Functionally, elongator complex-associated factor that is not a structural subunit but rather transiently contacts the complex. Regulates both meristem activity and organ growth; acts as a positive regulator of adaxial leaf patterning. Required for an early step in synthesis of 5-carbamoylmethyl (ncm5) groups present on uridines (ncm5U) at the wobble position in tRNA. The chain is Protein KTI12 homolog from Oryza sativa subsp. indica (Rice).